Here is a 64-residue protein sequence, read N- to C-terminus: uncharacterized protein (64 aa).

The chain crosses the membrane as a helical span at residues 30-52 (FYAIFEMLFWPLVSLISVGLLGE).

It localises to the membrane. This is an uncharacterized protein from Archaeoglobus fulgidus (strain ATCC 49558 / DSM 4304 / JCM 9628 / NBRC 100126 / VC-16).